The chain runs to 934 residues: Phosphoenolpyruvate carboxylase (934 aa).

Catalysis depends on residues His-161 and Lys-593.

Belongs to the PEPCase type 1 family. Mg(2+) is required as a cofactor.

The catalysed reaction is oxaloacetate + phosphate = phosphoenolpyruvate + hydrogencarbonate. Forms oxaloacetate, a four-carbon dicarboxylic acid source for the tricarboxylic acid cycle. This is Phosphoenolpyruvate carboxylase (ppc) from Mycobacterium leprae (strain TN).